A 145-amino-acid polypeptide reads, in one-letter code: D-aminoacyl-tRNA deacylase (145 aa).

The Gly-cisPro motif, important for rejection of L-amino acids signature appears at 137–138 (GP).

This sequence belongs to the DTD family. In terms of assembly, homodimer.

The protein localises to the cytoplasm. The catalysed reaction is glycyl-tRNA(Ala) + H2O = tRNA(Ala) + glycine + H(+). It carries out the reaction a D-aminoacyl-tRNA + H2O = a tRNA + a D-alpha-amino acid + H(+). Its function is as follows. An aminoacyl-tRNA editing enzyme that deacylates mischarged D-aminoacyl-tRNAs. Also deacylates mischarged glycyl-tRNA(Ala), protecting cells against glycine mischarging by AlaRS. Acts via tRNA-based rather than protein-based catalysis; rejects L-amino acids rather than detecting D-amino acids in the active site. By recycling D-aminoacyl-tRNA to D-amino acids and free tRNA molecules, this enzyme counteracts the toxicity associated with the formation of D-aminoacyl-tRNA entities in vivo and helps enforce protein L-homochirality. The chain is D-aminoacyl-tRNA deacylase from Shigella dysenteriae serotype 1 (strain Sd197).